A 671-amino-acid polypeptide reads, in one-letter code: UvrABC system protein C (671 aa).

The region spanning 16-95 is the GIY-YIG domain; it reads TTPGVYRFRD…IKEFKPRFNV (80 aa). The region spanning 207-242 is the UVR domain; the sequence is KRFISRLEKDMAAAVAELDYERAAGLRDDIIALRKV.

The protein belongs to the UvrC family. Interacts with UvrB in an incision complex.

It is found in the cytoplasm. Functionally, the UvrABC repair system catalyzes the recognition and processing of DNA lesions. UvrC both incises the 5' and 3' sides of the lesion. The N-terminal half is responsible for the 3' incision and the C-terminal half is responsible for the 5' incision. The protein is UvrABC system protein C of Paenarthrobacter aurescens (strain TC1).